The chain runs to 426 residues: Serine--tRNA ligase (426 aa).

231–233 (TSE) serves as a coordination point for L-serine. 262–264 (RSE) serves as a coordination point for ATP. Glu-285 contacts L-serine. Residue 349 to 352 (EISS) participates in ATP binding. Residue Ser-385 coordinates L-serine.

Belongs to the class-II aminoacyl-tRNA synthetase family. Type-1 seryl-tRNA synthetase subfamily. Homodimer. The tRNA molecule binds across the dimer.

It is found in the cytoplasm. It carries out the reaction tRNA(Ser) + L-serine + ATP = L-seryl-tRNA(Ser) + AMP + diphosphate + H(+). The catalysed reaction is tRNA(Sec) + L-serine + ATP = L-seryl-tRNA(Sec) + AMP + diphosphate + H(+). It participates in aminoacyl-tRNA biosynthesis; selenocysteinyl-tRNA(Sec) biosynthesis; L-seryl-tRNA(Sec) from L-serine and tRNA(Sec): step 1/1. In terms of biological role, catalyzes the attachment of serine to tRNA(Ser). Is also able to aminoacylate tRNA(Sec) with serine, to form the misacylated tRNA L-seryl-tRNA(Sec), which will be further converted into selenocysteinyl-tRNA(Sec). This Legionella pneumophila (strain Paris) protein is Serine--tRNA ligase.